We begin with the raw amino-acid sequence, 207 residues long: NADH-ubiquinone oxidoreductase chain 6 (207 aa).

Transmembrane regions (helical) follow at residues 15-35 (ILLD…ILVS), 40-60 (SILY…LIGI), 66-86 (LYIL…LSLF), 116-136 (LFIL…NNIY), and 184-204 (ILLI…IVLT).

This sequence belongs to the complex I subunit 6 family.

It is found in the mitochondrion membrane. It catalyses the reaction a ubiquinone + NADH + 5 H(+)(in) = a ubiquinol + NAD(+) + 4 H(+)(out). Core subunit of the mitochondrial membrane respiratory chain NADH dehydrogenase (Complex I) that is believed to belong to the minimal assembly required for catalysis. Complex I functions in the transfer of electrons from NADH to the respiratory chain. The immediate electron acceptor for the enzyme is believed to be ubiquinone. This is NADH-ubiquinone oxidoreductase chain 6 (ND6) from Wickerhamomyces canadensis (Yeast).